The primary structure comprises 290 residues: ATP synthase gamma chain (290 aa).

It belongs to the ATPase gamma chain family. F-type ATPases have 2 components, CF(1) - the catalytic core - and CF(0) - the membrane proton channel. CF(1) has five subunits: alpha(3), beta(3), gamma(1), delta(1), epsilon(1). CF(0) has three main subunits: a, b and c.

The protein localises to the cell membrane. Produces ATP from ADP in the presence of a proton gradient across the membrane. The gamma chain is believed to be important in regulating ATPase activity and the flow of protons through the CF(0) complex. The polypeptide is ATP synthase gamma chain (Wolbachia sp. subsp. Brugia malayi (strain TRS)).